The primary structure comprises 471 residues: MGVGRVTQIMGPVIDVRFNHDELPKINNALVLDVPKKDGTTESLTLEVALELGDDVVRTIAMDSTDGIKRGDDVKDTGRPISVPVGDDTLGRVFNVLGDPIDNAGPIPESVPREPIHRQPPPFDELSTKVEILETGIKVVDLLAPYIKGGKVGLFGGAGVGKTVLIQELINNIAQEHGGISVFAGVGERTREGNDLYFEMSDSGVIKKTAMVFGQMNEPPGARMRVALSGLTMAEYFRDVKGQDVLLFIDNIFRFTQAGSEVSALLGRMPSAVGYQPTLATEMGQLQERITSTMKGSITSIQAVFVPADDYTDPAPATAFAHLDATTNLERKLTEMGIYPAVDPLASTSRALEPSIVGQEHYDVARRVQATLQKYRELQDIIAILGMDELSDEDKSTVERARRIQFFLSQNFHVAEQFTGQKGSYVSVKRTVEDFKDILEGKYDHIPEDAFRLVGSMDDVLEKAKDMGVEV.

156–163 (GGAGVGKT) is a binding site for ATP.

This sequence belongs to the ATPase alpha/beta chains family. F-type ATPases have 2 components, CF(1) - the catalytic core - and CF(0) - the membrane proton channel. CF(1) has five subunits: alpha(3), beta(3), gamma(1), delta(1), epsilon(1). CF(0) has three main subunits: a(1), b(2) and c(9-12). The alpha and beta chains form an alternating ring which encloses part of the gamma chain. CF(1) is attached to CF(0) by a central stalk formed by the gamma and epsilon chains, while a peripheral stalk is formed by the delta and b chains.

The protein resides in the cell membrane. It catalyses the reaction ATP + H2O + 4 H(+)(in) = ADP + phosphate + 5 H(+)(out). Functionally, produces ATP from ADP in the presence of a proton gradient across the membrane. The catalytic sites are hosted primarily by the beta subunits. The polypeptide is ATP synthase subunit beta (Staphylococcus carnosus (strain TM300)).